Reading from the N-terminus, the 317-residue chain is Annexin D2 (317 aa).

Residue Ala-2 is modified to N-acetylalanine. 4 Annexin repeats span residues Pro-11–Leu-82, Asp-83–Ser-154, Met-166–Thr-238, and Tyr-242–Gly-313. Residues Phe-24, Gly-26, Gly-28, and Glu-68 each contribute to the Ca(2+) site. Ser-95 carries the phosphoserine modification. Phosphothreonine is present on residues Thr-100 and Thr-112. Position 129 is a phosphotyrosine (Tyr-129). Ile-255 and Gly-259 together coordinate Ca(2+). A Phosphotyrosine modification is found at Tyr-284. Ser-289 carries the post-translational modification Phosphoserine. Positions 299, 300, and 305 each coordinate Ca(2+).

It belongs to the annexin (TC 1.A.31.1) family. As to expression, expressed mainly in roots and flowers. Low in stems and bearly detectable in leaves.

Its subcellular location is the cytoplasm. It localises to the cytosol. The protein resides in the membrane. Functionally, may mediate regulated, targeted secretion of Golgi-derived vesicles during seedling development. The chain is Annexin D2 (ANN2) from Arabidopsis thaliana (Mouse-ear cress).